Consider the following 447-residue polypeptide: Phosphoglucosamine mutase (447 aa).

The Phosphoserine intermediate role is filled by serine 88. Mg(2+) is bound by residues serine 88, aspartate 231, aspartate 233, and aspartate 235. The residue at position 88 (serine 88) is a Phosphoserine.

Belongs to the phosphohexose mutase family. Monomer. Also forms large aggregates. Mg(2+) is required as a cofactor. Activated by phosphorylation. Glucose-1,6-bisphosphate or fructose-1,6-bisphosphate can activate the enzyme in vitro. However, since glucose-1,6-bisphosphate is not believed to form in methanogens, the physiologically relevant activator might be a serine kinase protein.

It catalyses the reaction alpha-D-glucosamine 1-phosphate = D-glucosamine 6-phosphate. Functionally, catalyzes the conversion of glucosamine-6-phosphate to glucosamine-1-phosphate. Also catalyzes the isomerization of glucose-1-phosphate to glucose-6-phosphate, but at a 5-fold lower rate. In Methanococcus maripaludis (strain DSM 14266 / JCM 13030 / NBRC 101832 / S2 / LL), this protein is Phosphoglucosamine mutase (glmM).